The following is a 337-amino-acid chain: Fructose-1,6-bisphosphatase class 1 (337 aa).

Residues glutamate 94, aspartate 116, leucine 118, and aspartate 119 each contribute to the Mg(2+) site. Residues 119–122 (DGSS), asparagine 210, and lysine 276 contribute to the substrate site. Residue glutamate 282 coordinates Mg(2+).

The protein belongs to the FBPase class 1 family. In terms of assembly, homotetramer. Requires Mg(2+) as cofactor.

The protein resides in the cytoplasm. It catalyses the reaction beta-D-fructose 1,6-bisphosphate + H2O = beta-D-fructose 6-phosphate + phosphate. It participates in carbohydrate biosynthesis; gluconeogenesis. The protein is Fructose-1,6-bisphosphatase class 1 of Burkholderia multivorans (strain ATCC 17616 / 249).